We begin with the raw amino-acid sequence, 454 residues long: Putative KilA-N domain-containing protein L4 (454 aa).

The segment covering M1–R12 has biased composition (basic residues). The segment at M1–N159 is disordered. A compositionally biased stretch (basic and acidic residues) spans R14 to K64. Residues S65–K79 are compositionally biased toward basic residues. Acidic residues-rich tracts occupy residues Y98 to L123 and E130 to D158. The KilA-N domain occupies E172–Y276.

This Acanthamoeba polyphaga mimivirus (APMV) protein is Putative KilA-N domain-containing protein L4.